The primary structure comprises 284 residues: Pantothenate synthetase (284 aa).

ATP is bound at residue 31–38 (MGNLHAGH). The active-site Proton donor is histidine 38. Glutamine 62 is a (R)-pantoate binding site. Glutamine 62 contributes to the beta-alanine binding site. ATP is bound at residue 150-153 (GKKD). A (R)-pantoate-binding site is contributed by glutamine 156. Residues valine 179 and 187-190 (MSSR) each bind ATP.

It belongs to the pantothenate synthetase family. As to quaternary structure, homodimer.

Its subcellular location is the cytoplasm. It carries out the reaction (R)-pantoate + beta-alanine + ATP = (R)-pantothenate + AMP + diphosphate + H(+). It functions in the pathway cofactor biosynthesis; (R)-pantothenate biosynthesis; (R)-pantothenate from (R)-pantoate and beta-alanine: step 1/1. Its function is as follows. Catalyzes the condensation of pantoate with beta-alanine in an ATP-dependent reaction via a pantoyl-adenylate intermediate. The protein is Pantothenate synthetase of Xanthomonas campestris pv. campestris (strain 8004).